Reading from the N-terminus, the 154-residue chain is Putative nuclear shuttle protein (154 aa).

This sequence belongs to the nanoviridae nuclear shuttle protein family.

The protein resides in the host nucleus. It is found in the host cytoplasm. In terms of biological role, putative nuclear shuttle protein. In Musa (BBTV), this protein is Putative nuclear shuttle protein (DNA-N).